A 315-amino-acid chain; its full sequence is Prephenate dehydratase (315 aa).

The 188-residue stretch at 3-190 (RIAYLGPQGT…ARTRFVLVGR (188 aa)) folds into the Prephenate dehydratase domain. The ACT domain occupies 204-281 (SVALRLPNTP…EDVRYLGSWP (78 aa)).

In terms of assembly, homodimer.

The catalysed reaction is prephenate + H(+) = 3-phenylpyruvate + CO2 + H2O. It functions in the pathway amino-acid biosynthesis; L-phenylalanine biosynthesis; phenylpyruvate from prephenate: step 1/1. The polypeptide is Prephenate dehydratase (pheA) (Mycobacterium sp. (strain KMS)).